The primary structure comprises 218 residues: GTP cyclohydrolase 1 (218 aa).

Cys111, His114, and Cys182 together coordinate Zn(2+).

The protein belongs to the GTP cyclohydrolase I family. As to quaternary structure, toroid-shaped homodecamer, composed of two pentamers of five dimers.

The catalysed reaction is GTP + H2O = 7,8-dihydroneopterin 3'-triphosphate + formate + H(+). Its pathway is cofactor biosynthesis; 7,8-dihydroneopterin triphosphate biosynthesis; 7,8-dihydroneopterin triphosphate from GTP: step 1/1. This Buchnera aphidicola subsp. Schizaphis graminum (strain Sg) protein is GTP cyclohydrolase 1.